Here is a 244-residue protein sequence, read N- to C-terminus: Deoxynucleotide monophosphate kinase (244 aa).

A dGMP-binding site is contributed by Lys-10. ATP is bound by residues Arg-11, Gly-13, Asp-15, and Thr-16. Residues Ile-36, Lys-37, Arg-70, Arg-137, Gly-144, Thr-145, Val-149, Trp-157, Asp-180, Arg-182, Gln-183, Glu-186, and Thr-213 each coordinate dGMP.

The protein belongs to the dNMP kinase family. In terms of assembly, homodimer. Requires Mg(2+) as cofactor.

It catalyses the reaction dTMP + ATP = dTDP + ADP. The catalysed reaction is dGMP + ATP = dGDP + ADP. It carries out the reaction 5-hydroxymethyl-dCMP + ATP = 5-hydroxymethyl-dCDP + ADP. Allows the synthesis of deoxyribonucleoside triphosphates necessary for the rapid viral DNA replication. Phosphorylates dGMP, dTMP and 5-hydroxymethyl-dCMP (hmdCMP) while excluding dCMP and dAMP. The phosphorylation of 5-hydroxymethyl-dCMP represents the first step in the replacement of cytosine by hydroxymethylcytosine in new viral DNA genomes. This Escherichia phage RB69 (Bacteriophage RB69) protein is Deoxynucleotide monophosphate kinase (1).